The following is a 128-amino-acid chain: Adrenodoxin homolog (128 aa).

The 2Fe-2S ferredoxin-type domain maps to 12-115 (EQIRIFFKTM…NAVFTVPRAT (104 aa)). Residues cysteine 50, cysteine 56, cysteine 59, and cysteine 96 each contribute to the [2Fe-2S] cluster site.

This sequence belongs to the adrenodoxin/putidaredoxin family. The cofactor is [2Fe-2S] cluster.

Its subcellular location is the mitosome. Its function is as follows. Ferredoxins are iron-sulfur proteins that transfer electrons in a wide variety of metabolic reactions. In Encephalitozoon cuniculi (strain GB-M1) (Microsporidian parasite), this protein is Adrenodoxin homolog.